We begin with the raw amino-acid sequence, 350 residues long: Enoyl-[acyl-carrier-protein] reductase, mitochondrial (350 aa).

The N-terminal 12 residues, 1-12 (MWLGLRLFHRPF), are a transit peptide targeting the mitochondrion. Tyr68 functions as the Proton donor in the catalytic mechanism. NADP(+) is bound by residues Asn141, 167–170 (NSGV), 190–192 (RDR), 259–262 (YGGM), 284–286 (FWV), and Lys345.

Belongs to the zinc-containing alcohol dehydrogenase family. Quinone oxidoreductase subfamily. As to quaternary structure, homodimer. Expressed in the developing pronephros.

It localises to the mitochondrion. It catalyses the reaction a 2,3-saturated acyl-[ACP] + NADP(+) = a (2E)-enoyl-[ACP] + NADPH + H(+). Catalyzes the NADPH-dependent reduction of trans-2-enoyl thioesters in mitochondrial fatty acid synthesis (fatty acid synthesis type II). Fatty acid chain elongation in mitochondria uses acyl carrier protein (ACP) as an acyl group carrier, but the enzyme accepts both ACP and CoA thioesters as substrates in vitro. May provide the octanoyl chain used for lipoic acid biosynthesis, regulating protein lipoylation and mitochondrial respiratory activity. Involved in iron homeostasis; affecting Fe-S cluster assembly and ceramide metabolism. Required for proper morphology and bioenergetic functions of mitochondria. Required for maintenance of neurons. Functions in pronephros development, regulating late differentiation of all pronephric tubule segments. The protein is Enoyl-[acyl-carrier-protein] reductase, mitochondrial (mecr) of Xenopus tropicalis (Western clawed frog).